Here is a 64-residue protein sequence, read N- to C-terminus: Fatty acid synthase (64 aa).

The Carrier domain maps to 1–64 (AEGEGQRDLL…VLSMREVRQL (64 aa)). Position 38 is an O-(pantetheine 4'-phosphoryl)serine; alternate (S38). S38 carries the phosphoserine; alternate modification.

Homodimer which is arranged in a head to tail fashion. Interacts with CEACAM1; this interaction is insulin and phosphorylation-dependent; reduces fatty-acid synthase activity.

The protein resides in the cytoplasm. It is found in the melanosome. It catalyses the reaction acetyl-CoA + n malonyl-CoA + 2n NADPH + 2n H(+) = a long-chain fatty acid + (n+1) CoA + n CO2 + 2n NADP(+).. Functionally, fatty acid synthetase catalyzes the formation of long-chain fatty acids from acetyl-CoA, malonyl-CoA and NADPH. This multifunctional protein has 7 catalytic activities as an acyl carrier protein. This Oryctolagus cuniculus (Rabbit) protein is Fatty acid synthase (FASN).